The following is a 211-amino-acid chain: Protein 33K (211 aa).

Disordered regions lie at residues 1 to 95 and 107 to 140; these read MPPK…PCSL and AGSPTAPAAPTKRLEKTPRVRKTSSAIATRQDSP. Positions 24 to 65 are enriched in acidic residues; sequence DEEETWDDSQAEEVSDEEAEEQMESWDSLDEEDLEDVEEETI. A compositionally biased stretch (pro residues) spans 83-92; sequence KTIPPLPPQP. A compositionally biased stretch (polar residues) spans 129–140; sequence TSSAIATRQDSP. The interval 154 to 181 is necessary for nuclear subcellular location; the sequence is YAIFQQSRGQQLELKVKNRSLRSLTRSC. Residues 160–180 are RS-repeat; required for splicing enhancer activity; sequence SRGQQLELKVKNRSLRSLTRS.

It belongs to the adenoviridae splicing factor family. In terms of assembly, homooligomer. Interacts with DBP; this interaction occurs at a unique vertex during genome packaging. Interacts with IVa2; this interaction occurs at a unique vertex during genome packaging and seems to potentiate IVa2 and 33K oligomerization. In terms of processing, phosphorylated in vitro by human PKA and PRKDC. PRKDC inhibits, whereas PKA activates the splicing factor.

It is found in the host nucleus. In terms of biological role, promotes alternative splicing of late transcripts by promoting splicing at weak 3' splice sites. Required for the temporal activation of major late pre-mRNA splicing at late times of infection. Induces the splicing and expression of the late capsid vertex protein. Functionally, probably functions as the small terminase that is part of the molecular motor that translocates genomic DNA in empty capsid during DNA packaging. This motor is located at a unique vertex and comprises at least the IVa2 ATPase, the small terminase 33K and probably a portal. Forms a ring-like structure of about 17 nm in which genomic DNA is translocated into the capsid. Stimulates IVa2 ATPase activity in the presence of the viral genome. Once the DNA is packaged, the terminase detaches: the 33K protein is present in the empty particles, but not in the mature virions. Also involved in virion assembly. The chain is Protein 33K from Human adenovirus F serotype 40 (HAdV-40).